The sequence spans 33 residues: MLFTFAWASLAAIFTFSIAMVVWGRNGDGTIDF.

Residues 2–22 (LFTFAWASLAAIFTFSIAMVV) form a helical membrane-spanning segment.

The protein belongs to the PetN family. In terms of assembly, the 4 large subunits of the cytochrome b6-f complex are cytochrome b6, subunit IV (17 kDa polypeptide, PetD), cytochrome f and the Rieske protein, while the 4 small subunits are PetG, PetL, PetM and PetN. The complex functions as a dimer.

The protein resides in the cellular thylakoid membrane. Functionally, component of the cytochrome b6-f complex, which mediates electron transfer between photosystem II (PSII) and photosystem I (PSI), cyclic electron flow around PSI, and state transitions. This Prochlorococcus marinus (strain MIT 9211) protein is Cytochrome b6-f complex subunit 8.